Consider the following 210-residue polypeptide: HTH-type transcriptional repressor ComR (210 aa).

An HTH tetR-type domain is found at 18–78 (VFDRDAALDK…AVLDRYIDRF (61 aa)). The segment at residues 41-60 (SLADLVEATGAKAPTLYAEF) is a DNA-binding region (H-T-H motif).

Its activity is regulated as follows. Binding to the promoter region of BhsA/ComC is released in the presence of copper. Its function is as follows. Represses expression of BhsA/ComC by binding to its promoter region in the absence of copper. This chain is HTH-type transcriptional repressor ComR (comR), found in Escherichia coli (strain K12).